The primary structure comprises 568 residues: Urease subunit alpha (568 aa).

The region spanning 131 to 568 is the Urease domain; sequence GGMDAHIHFI…LPLAQRYFLY (438 aa). Positions 136, 138, and 219 each coordinate Ni(2+). Lysine 219 bears the N6-carboxylysine mark. Position 221 (histidine 221) interacts with substrate. Ni(2+)-binding residues include histidine 248 and histidine 274. Histidine 322 serves as the catalytic Proton donor. Residue aspartate 362 coordinates Ni(2+).

This sequence belongs to the metallo-dependent hydrolases superfamily. Urease alpha subunit family. As to quaternary structure, heterotrimer of UreA (gamma), UreB (beta) and UreC (alpha) subunits. Three heterotrimers associate to form the active enzyme. It depends on Ni cation as a cofactor. Post-translationally, carboxylation allows a single lysine to coordinate two nickel ions.

The protein localises to the cytoplasm. The catalysed reaction is urea + 2 H2O + H(+) = hydrogencarbonate + 2 NH4(+). It functions in the pathway nitrogen metabolism; urea degradation; CO(2) and NH(3) from urea (urease route): step 1/1. This is Urease subunit alpha from Cereibacter sphaeroides (strain KD131 / KCTC 12085) (Rhodobacter sphaeroides).